A 344-amino-acid chain; its full sequence is Dihydroorotase (344 aa).

Zn(2+) is bound by residues histidine 14 and histidine 16. Residues 16-18 and asparagine 42 each bind substrate; that span reads HFR. Positions 100, 137, and 175 each coordinate Zn(2+). An N6-carboxylysine modification is found at lysine 100. Histidine 137 contributes to the substrate binding site. Leucine 220 is a substrate binding site. Aspartate 248 is a binding site for Zn(2+). Aspartate 248 is an active-site residue. Substrate is bound by residues histidine 252 and alanine 264.

It belongs to the metallo-dependent hydrolases superfamily. DHOase family. Class II DHOase subfamily. As to quaternary structure, homodimer. Requires Zn(2+) as cofactor.

It carries out the reaction (S)-dihydroorotate + H2O = N-carbamoyl-L-aspartate + H(+). It participates in pyrimidine metabolism; UMP biosynthesis via de novo pathway; (S)-dihydroorotate from bicarbonate: step 3/3. Functionally, catalyzes the reversible cyclization of carbamoyl aspartate to dihydroorotate. This is Dihydroorotase from Alcanivorax borkumensis (strain ATCC 700651 / DSM 11573 / NCIMB 13689 / SK2).